A 95-amino-acid chain; its full sequence is Hge-scorpine (95 aa).

The signal sequence occupies residues 1–19 (MNTKLTVLCFLGIVTIVSC). The region spanning 55-94 (QFGCFANVDVKGDCKRHCKAEDKEGICHGTKCKCGVPISY) is the BetaSPN-type CS-alpha/beta domain. 3 disulfides stabilise this stretch: cysteine 58–cysteine 81, cysteine 68–cysteine 86, and cysteine 72–cysteine 88.

This sequence belongs to the long chain scorpion toxin family. Class 3 subfamily. Expressed by the venom gland.

The protein localises to the secreted. Functionally, has antibacterial activity against B.subtilis, but not against S.aureus. Also has hemolytic and cytolytic activities. Since cell lysis occurs at the tested concentrations, observation of activity on potassium channels is impossible. Blocks Kv1.1/KCNA1 (IC(50)=185 nM) potassium channels. Shows a weak hemolytic activity. This chain is Hge-scorpine, found in Hoffmannihadrurus gertschi (Scorpion).